The following is a 397-amino-acid chain: Methylthioribose kinase (397 aa).

ATP-binding positions include Asn-43, Lys-60, and 114–116; that span reads EDL. Asp-232 serves as a coordination point for substrate. 249 to 251 is an ATP binding site; sequence DPE. Arg-340 contributes to the substrate binding site.

It belongs to the methylthioribose kinase family. In terms of assembly, homodimer.

It catalyses the reaction 5-(methylsulfanyl)-D-ribose + ATP = 5-(methylsulfanyl)-alpha-D-ribose 1-phosphate + ADP + H(+). Its pathway is amino-acid biosynthesis; L-methionine biosynthesis via salvage pathway; S-methyl-5-thio-alpha-D-ribose 1-phosphate from S-methyl-5'-thioadenosine (hydrolase route): step 2/2. In terms of biological role, catalyzes the phosphorylation of methylthioribose into methylthioribose-1-phosphate. The polypeptide is Methylthioribose kinase (Bacillus pumilus (strain SAFR-032)).